The chain runs to 361 residues: Chorismate synthase (361 aa).

NADP(+) is bound by residues R48 and R54. FMN is bound by residues 125-127 (RSS), 238-239 (NA), G278, 293-297 (KPTSS), and R319.

This sequence belongs to the chorismate synthase family. Homotetramer. Requires FMNH2 as cofactor.

The enzyme catalyses 5-O-(1-carboxyvinyl)-3-phosphoshikimate = chorismate + phosphate. The protein operates within metabolic intermediate biosynthesis; chorismate biosynthesis; chorismate from D-erythrose 4-phosphate and phosphoenolpyruvate: step 7/7. Functionally, catalyzes the anti-1,4-elimination of the C-3 phosphate and the C-6 proR hydrogen from 5-enolpyruvylshikimate-3-phosphate (EPSP) to yield chorismate, which is the branch point compound that serves as the starting substrate for the three terminal pathways of aromatic amino acid biosynthesis. This reaction introduces a second double bond into the aromatic ring system. In Vibrio campbellii (strain ATCC BAA-1116), this protein is Chorismate synthase.